The chain runs to 1112 residues: Plasma membrane calcium-transporting ATPase 2 (1112 aa).

The Cytoplasmic portion of the chain corresponds to methionine 1–threonine 94. A helical transmembrane segment spans residues phenylalanine 95–alanine 115. Topologically, residues leucine 116–tryptophan 152 are extracellular. A helical membrane pass occupies residues isoleucine 153–aspartate 173. Over tryptophan 174–leucine 373 the chain is Cytoplasmic. A compositionally biased stretch (basic and acidic residues) spans glutamate 298–histidine 311. A disordered region spans residues glutamate 298 to lysine 363. The segment covering glutamine 312–isoleucine 327 has biased composition (polar residues). Residues alanine 351–lysine 363 show a composition bias toward basic and acidic residues. Residues threonine 374–isoleucine 393 form a helical membrane-spanning segment. Over isoleucine 394–phenylalanine 426 the chain is Extracellular. The helical transmembrane segment at phenylalanine 427–leucine 444 threads the bilayer. Over alanine 445 to isoleucine 858 the chain is Cytoplasmic. Aspartate 482 functions as the 4-aspartylphosphate intermediate in the catalytic mechanism. Positions 803 and 807 each coordinate Mg(2+). A helical membrane pass occupies residues serine 859–threonine 878. Topologically, residues glycine 879 to leucine 888 are extracellular. Residues lysine 889–alanine 909 form a helical membrane-spanning segment. The Cytoplasmic segment spans residues threonine 910–leucine 929. Residues isoleucine 930–leucine 952 traverse the membrane as a helical segment. The Extracellular segment spans residues leucine 953–leucine 970. Residues histidine 971 to asparagine 992 form a helical membrane-spanning segment. The Cytoplasmic segment spans residues glutamate 993–arginine 1011. The helical transmembrane segment at asparagine 1012 to glycine 1033 threads the bilayer. Residues glycine 1034–aspartate 1043 lie on the Extracellular side of the membrane. Residues leucine 1044–alanine 1065 traverse the membrane as a helical segment. Residues threonine 1066 to leucine 1112 lie on the Cytoplasmic side of the membrane. The disordered stretch occupies residues glutamate 1086 to leucine 1112. A compositionally biased stretch (acidic residues) spans leucine 1087–glutamate 1098. The segment covering isoleucine 1099 to leucine 1112 has biased composition (basic and acidic residues). The calmodulin-binding subdomain A stretch occupies residues leucine 1106 to leucine 1112.

The protein belongs to the cation transport ATPase (P-type) (TC 3.A.3) family. Type IIB subfamily.

Its subcellular location is the cell membrane. It catalyses the reaction Ca(2+)(in) + ATP + H2O = Ca(2+)(out) + ADP + phosphate + H(+). This magnesium-dependent enzyme catalyzes the hydrolysis of ATP coupled with the transport of calcium out of the cell. The chain is Plasma membrane calcium-transporting ATPase 2 (atp2b2) from Oreochromis mossambicus (Mozambique tilapia).